Here is a 348-residue protein sequence, read N- to C-terminus: Mycothiol acetyltransferase (348 aa).

2 consecutive N-acetyltransferase domains span residues 12-156 (TSMR…VDVT) and 169-330 (VAVR…HGTP). Glutamate 44 lines the 1D-myo-inositol 2-(L-cysteinylamino)-2-deoxy-alpha-D-glucopyranoside pocket. An acetyl-CoA-binding site is contributed by 91 to 93 (LVV). 1D-myo-inositol 2-(L-cysteinylamino)-2-deoxy-alpha-D-glucopyranoside is bound by residues glutamate 196, lysine 235, and glutamate 253. Residues 257-259 (VGV) and 264-270 (QGLGMGR) contribute to the acetyl-CoA site. Tyrosine 291 serves as a coordination point for 1D-myo-inositol 2-(L-cysteinylamino)-2-deoxy-alpha-D-glucopyranoside. Residue 296–301 (NTVAVH) coordinates acetyl-CoA. Positions 320–348 (PPAGSPAHGTPLVRVTDTPSSPGDATMGS) are disordered. The span at 336–348 (DTPSSPGDATMGS) shows a compositional bias: polar residues.

The protein belongs to the acetyltransferase family. MshD subfamily. In terms of assembly, monomer.

The enzyme catalyses 1D-myo-inositol 2-(L-cysteinylamino)-2-deoxy-alpha-D-glucopyranoside + acetyl-CoA = mycothiol + CoA + H(+). Its function is as follows. Catalyzes the transfer of acetyl from acetyl-CoA to desacetylmycothiol (Cys-GlcN-Ins) to form mycothiol. The sequence is that of Mycothiol acetyltransferase from Cellulomonas flavigena (strain ATCC 482 / DSM 20109 / BCRC 11376 / JCM 18109 / NBRC 3775 / NCIMB 8073 / NRS 134).